A 66-amino-acid chain; its full sequence is Large ribosomal subunit protein uL29 (66 aa).

It belongs to the universal ribosomal protein uL29 family.

The polypeptide is Large ribosomal subunit protein uL29 (Francisella tularensis subsp. tularensis (strain FSC 198)).